The following is a 93-amino-acid chain: Small ribosomal subunit protein uS19c (93 aa).

The protein belongs to the universal ribosomal protein uS19 family.

The protein resides in the plastid. The protein localises to the chloroplast. Protein S19 forms a complex with S13 that binds strongly to the 16S ribosomal RNA. The protein is Small ribosomal subunit protein uS19c of Tetradesmus obliquus (Green alga).